A 235-amino-acid chain; its full sequence is MAEKVNNFPPLPKFIPLKPCFYQDFEADIPPQHVSMTKRLYYLWMLNSVTLAVNLVGCLAWLIGGGGATNFGLAFLWLILFTPCSYVCWFRPIYKAFKTDSSFSFMAFFFTFMAQLVISIIQAVGIPGWGVCGWIATISFFGTNIGSAVVMLIPTVMFTVMAVFSFIALSMVHKFYRGSGGSFSKAQEEWTTGAWKNPHVQQAAQNAAMGAAQGAMNQPQTQYSATPNYTYSNEM.

The Cytoplasmic portion of the chain corresponds to 1 to 39; the sequence is MAEKVNNFPPLPKFIPLKPCFYQDFEADIPPQHVSMTKR. Residues 40–60 form a helical membrane-spanning segment; that stretch reads LYYLWMLNSVTLAVNLVGCLA. The Extracellular portion of the chain corresponds to 61-67; sequence WLIGGGG. Residues 68 to 88 traverse the membrane as a helical segment; sequence ATNFGLAFLWLILFTPCSYVC. Topologically, residues 89–102 are cytoplasmic; sequence WFRPIYKAFKTDSS. Residues 103–125 traverse the membrane as a helical segment; that stretch reads FSFMAFFFTFMAQLVISIIQAVG. Topologically, residues 126-148 are extracellular; sequence IPGWGVCGWIATISFFGTNIGSA. Residues 149–169 traverse the membrane as a helical segment; sequence VVMLIPTVMFTVMAVFSFIAL. Residues 170-235 are Cytoplasmic-facing; sequence SMVHKFYRGS…TPNYTYSNEM (66 aa).

The protein belongs to the SCAMP family. SCAMP5 subfamily. In terms of assembly, interacts (via C-terminal part) with SYT1 and SYT2; interaction with synaptotagmins making a link with the SNARE molecules. Interacts with SLC9A7. Expressed both by neuronal and non-neuronal tissues. Expressed in brain, stomach, thyroid, spinal cord, lymph node, trachea, adrenal gland, bone marrow and in the different parts of brain. In thyroid tissues, it is expressed by the follicular epithelial cells. In the adrenal gland tissues it is detected in the zona fasciculata of the cortex region (at protein level).

It localises to the cell membrane. The protein localises to the golgi apparatus membrane. The protein resides in the golgi apparatus. Its subcellular location is the trans-Golgi network membrane. It is found in the recycling endosome membrane. It localises to the cytoplasmic vesicle. The protein localises to the secretory vesicle. The protein resides in the synaptic vesicle membrane. Its function is as follows. Required for the calcium-dependent exocytosis of signal sequence-containing cytokines such as CCL5. Probably acts in cooperation with the SNARE machinery. May play a role in accumulation of expanded polyglutamine (polyQ) protein huntingtin (HTT) in case of endoplasmic reticulum stress by inhibiting the endocytosis pathway. The chain is Secretory carrier-associated membrane protein 5 (SCAMP5) from Homo sapiens (Human).